The following is a 369-amino-acid chain: Glutamate 5-kinase (369 aa).

Residue lysine 9 coordinates ATP. Positions 49, 136, and 148 each coordinate substrate. Residues threonine 168–aspartate 169 and threonine 210–lysine 216 each bind ATP. Positions glutamine 275–tryptophan 355 constitute a PUA domain.

It belongs to the glutamate 5-kinase family.

It is found in the cytoplasm. The catalysed reaction is L-glutamate + ATP = L-glutamyl 5-phosphate + ADP. The protein operates within amino-acid biosynthesis; L-proline biosynthesis; L-glutamate 5-semialdehyde from L-glutamate: step 1/2. Functionally, catalyzes the transfer of a phosphate group to glutamate to form L-glutamate 5-phosphate. The protein is Glutamate 5-kinase of Streptococcus pneumoniae (strain ATCC 700669 / Spain 23F-1).